The sequence spans 400 residues: Glycine betaine/proline betaine transport system ATP-binding protein ProV (400 aa).

One can recognise an ABC transporter domain in the interval 29–265 (LSKEQILEKT…PANDYVRTFF (237 aa)). 61 to 68 (GLSGSGKS) contacts ATP. CBS domains are found at residues 282 to 341 (RTPN…GLDA) and 343 to 400 (LIDA…VNNG).

Belongs to the ABC transporter superfamily. In terms of assembly, the complex is composed of two ATP-binding proteins (ProV), two transmembrane proteins (ProW) and a solute-binding protein (ProX).

The protein resides in the cell inner membrane. Functionally, part of the ProU ABC transporter complex involved in glycine betaine and proline betaine uptake. Probably responsible for energy coupling to the transport system. The sequence is that of Glycine betaine/proline betaine transport system ATP-binding protein ProV from Escherichia coli (strain K12).